We begin with the raw amino-acid sequence, 663 residues long: Glutamate-rich protein 6 (663 aa).

Disordered regions lie at residues 1–74 (MAHL…ETFS) and 106–136 (LTSTFVPSQSATSTETPSASPPSSTSSHKSF). A compositionally biased stretch (acidic residues) spans 20-69 (ESEEELEEEEEEEEVEEEEEEVEEEEEEVEEEEEEVVEEELVGEEQELEA). Positions 112–132 (PSQSATSTETPSASPPSSTSS) are enriched in low complexity.

The protein belongs to the ERICH6 family.

It localises to the nucleus. The sequence is that of Glutamate-rich protein 6 (ERICH6) from Homo sapiens (Human).